Here is a 356-residue protein sequence, read N- to C-terminus: NADH-quinone oxidoreductase subunit H (356 aa).

Helical transmembrane passes span 22 to 42 (GVVSIKVIALIICLLLATAYL), 59 to 79 (PSLAGPFGLLQPIADAIKLVF), 93 to 113 (FIIAPIITFVLSLLGWSVIPI), 124 to 144 (IGGILFILAVTSLGVYGIIIA), 171 to 191 (MALSIVAVLIVTGEMDLIQIV), 198 to 218 (PIWLTIMMLPLAVIYFISILA), 240 to 260 (VEYSSMAFAMFFLGEYANMIL), 285 to 305 (IPGYIWFILKVSMVLFCFLWI), and 321 to 341 (GLKVFLPIVLAWIIVVSTILV).

It belongs to the complex I subunit 1 family. NDH-1 is composed of 14 different subunits. Subunits NuoA, H, J, K, L, M, N constitute the membrane sector of the complex.

The protein localises to the cell inner membrane. The enzyme catalyses a quinone + NADH + 5 H(+)(in) = a quinol + NAD(+) + 4 H(+)(out). Functionally, NDH-1 shuttles electrons from NADH, via FMN and iron-sulfur (Fe-S) centers, to quinones in the respiratory chain. The immediate electron acceptor for the enzyme in this species is believed to be ubiquinone. Couples the redox reaction to proton translocation (for every two electrons transferred, four hydrogen ions are translocated across the cytoplasmic membrane), and thus conserves the redox energy in a proton gradient. This subunit may bind ubiquinone. The protein is NADH-quinone oxidoreductase subunit H of Orientia tsutsugamushi (strain Boryong) (Rickettsia tsutsugamushi).